Consider the following 245-residue polypeptide: Tetraspanin-6 (245 aa).

Topologically, residues 1–19 (MASPSRRLQTKPVITCFKS) are cytoplasmic. Residues 20–40 (VLLIYTFIFWITGVILLAVGI) form a helical membrane-spanning segment. Topologically, residues 41–59 (WGKVSLENYFSLLNEKATN) are extracellular. The helical transmembrane segment at 60-80 (VPFVLIATGTVIILLGTFGCF) threads the bilayer. The Cytoplasmic portion of the chain corresponds to 81 to 93 (ATCRASAWMLKLY). A helical transmembrane segment spans residues 94-114 (AMFLTLVFLVELVAAIVGFVF). At 115-208 (RHEIKNSFKN…IKVMTIIESE (94 aa)) the chain is on the extracellular side. N-linked (GlcNAc...) asparagine glycosylation occurs at N134. A helical membrane pass occupies residues 209 to 229 (MGVVAGISFGVACFQLIGIFL). Over 230-245 (AYCLSRAITNNQYEIV) the chain is Cytoplasmic.

It belongs to the tetraspanin (TM4SF) family.

Its subcellular location is the membrane. The chain is Tetraspanin-6 (TSPAN6) from Homo sapiens (Human).